The chain runs to 302 residues: Recombination-associated protein RdgC (302 aa).

Belongs to the RdgC family.

Its subcellular location is the cytoplasm. It is found in the nucleoid. In terms of biological role, may be involved in recombination. This is Recombination-associated protein RdgC from Actinobacillus pleuropneumoniae serotype 5b (strain L20).